A 228-amino-acid chain; its full sequence is MKISFHGQSCIKIITGNTTILVDPFISGNEKCDLKAEEQMPDFIVLSHGHDDHVGDTVEIAKNSGATVICNADLASFLAVEDGLENIAAMHIGGKRQFEFGQVKLTQAFHGSQTVRNGRIINLGFPTGVVFTIENKNIYFAGDTGLFSDMKLIGELNPLDVAFLPIGDNFTMGPEDAAIAARFLQTKLVIPMHYNTFPLIEQDPHKFVASLDEGISGKVLEIGESIEI.

This sequence belongs to the UPF0173 family.

This Listeria welshimeri serovar 6b (strain ATCC 35897 / DSM 20650 / CCUG 15529 / CIP 8149 / NCTC 11857 / SLCC 5334 / V8) protein is UPF0173 metal-dependent hydrolase lwe1590.